The following is a 413-amino-acid chain: Transposon Ty4-H Gag polyprotein (413 aa).

A coiled-coil region spans residues 39-115 (RKVSIKDEQV…IQLLETNENN (77 aa)). Residues 380–413 (RQQQLKSSAKRTKVLEQDTKKVKQSVQQQKTGNY) are disordered. The span at 403 to 413 (QSVQQQKTGNY) shows a compositional bias: low complexity.

Capsid protein (CA) is the structural component of the virus-like particle (VLP), forming the shell that encapsulates the retrotransposons dimeric RNA genome. The polypeptide is Transposon Ty4-H Gag polyprotein (TY4A-H) (Saccharomyces cerevisiae (strain ATCC 204508 / S288c) (Baker's yeast)).